We begin with the raw amino-acid sequence, 80 residues long: Acyl carrier protein (80 aa).

Residues 4–79 (QEIFEKVKAV…DAVEYIKAKL (76 aa)) form the Carrier domain. The residue at position 39 (serine 39) is an O-(pantetheine 4'-phosphoryl)serine.

Belongs to the acyl carrier protein (ACP) family. In terms of processing, 4'-phosphopantetheine is transferred from CoA to a specific serine of apo-ACP by AcpS. This modification is essential for activity because fatty acids are bound in thioester linkage to the sulfhydryl of the prosthetic group.

The protein localises to the cytoplasm. The protein operates within lipid metabolism; fatty acid biosynthesis. Its function is as follows. Carrier of the growing fatty acid chain in fatty acid biosynthesis. In Thermus thermophilus (strain ATCC BAA-163 / DSM 7039 / HB27), this protein is Acyl carrier protein.